A 282-amino-acid polypeptide reads, in one-letter code: Acetyl-coenzyme A carboxylase carboxyl transferase subunit beta (282 aa).

Residues 28 to 282 (IMTKCPSCRT…TKILDIHHVS (255 aa)) enclose the CoA carboxyltransferase N-terminal domain. Zn(2+)-binding residues include Cys-32, Cys-35, Cys-51, and Cys-54. The C4-type zinc-finger motif lies at 32–54 (CPSCRTIMYTKELKKNLYVCDSC).

Belongs to the AccD/PCCB family. As to quaternary structure, acetyl-CoA carboxylase is a heterohexamer composed of biotin carboxyl carrier protein (AccB), biotin carboxylase (AccC) and two subunits each of ACCase subunit alpha (AccA) and ACCase subunit beta (AccD). Requires Zn(2+) as cofactor.

It is found in the cytoplasm. The catalysed reaction is N(6)-carboxybiotinyl-L-lysyl-[protein] + acetyl-CoA = N(6)-biotinyl-L-lysyl-[protein] + malonyl-CoA. The protein operates within lipid metabolism; malonyl-CoA biosynthesis; malonyl-CoA from acetyl-CoA: step 1/1. Its function is as follows. Component of the acetyl coenzyme A carboxylase (ACC) complex. Biotin carboxylase (BC) catalyzes the carboxylation of biotin on its carrier protein (BCCP) and then the CO(2) group is transferred by the transcarboxylase to acetyl-CoA to form malonyl-CoA. The sequence is that of Acetyl-coenzyme A carboxylase carboxyl transferase subunit beta from Halalkalibacterium halodurans (strain ATCC BAA-125 / DSM 18197 / FERM 7344 / JCM 9153 / C-125) (Bacillus halodurans).